Here is a 349-residue protein sequence, read N- to C-terminus: 1-acylglycerol-3-phosphate O-acyltransferase ABHD5 (349 aa).

An N-acetylalanine modification is found at A2. One can recognise an AB hydrolase-1 domain in the interval 77–184; it reads PLVLLHGFGG…LVEPWGFPER (108 aa). Phosphoserine is present on S122. An HXXXXD motif motif is present at residues 327 to 332; it reads HYVYAD.

Belongs to the peptidase S33 family. ABHD4/ABHD5 subfamily. Interacts with ADRP, PLIN and PNPLA2. Interacts with PLIN5; promotes interaction with PNPLA2. As to expression, widely expressed in various tissues, including lymphocytes, liver, skeletal muscle and brain. Expressed by upper epidermal layers and dermal fibroblasts in skin, hepatocytes and neurons (at protein level).

Its subcellular location is the cytoplasm. It localises to the lipid droplet. The protein localises to the cytosol. The catalysed reaction is a 1-acyl-sn-glycero-3-phosphate + an acyl-CoA = a 1,2-diacyl-sn-glycero-3-phosphate + CoA. It carries out the reaction 1-(9Z-octadecenoyl)-sn-glycero-3-phosphate + hexadecanoyl-CoA = 1-(9Z)-octadecenoyl-2-hexadecanoyl-sn-glycero-3-phosphate + CoA. The enzyme catalyses 1-(9Z-octadecenoyl)-sn-glycero-3-phosphate + octadecanoyl-CoA = 1-(9Z-octadecenoyl)-2-octadecanoyl-sn-glycero-3-phosphate + CoA. It catalyses the reaction 1-(9Z-octadecenoyl)-sn-glycero-3-phosphate + (9Z)-octadecenoyl-CoA = 1,2-di-(9Z-octadecenoyl)-sn-glycero-3-phosphate + CoA. The catalysed reaction is 1-(9Z-octadecenoyl)-sn-glycero-3-phosphate + (5Z,8Z,11Z,14Z)-eicosatetraenoyl-CoA = 1-(9Z)-octadecenoyl-2-(5Z,8Z,11Z,14Z)-eicosatetraenoyl-sn-glycero-3-phosphate + CoA. It carries out the reaction eicosanoyl-CoA + 1-(9Z-octadecenoyl)-sn-glycero-3-phosphate = 1-(9Z)-octadecenoyl-2-eicosanoyl-sn-glycero-3-phosphate + CoA. The enzyme catalyses 1-hexadecanoyl-sn-glycero-3-phosphate + (9Z)-octadecenoyl-CoA = 1-hexadecanoyl-2-(9Z-octadecenoyl)-sn-glycero-3-phosphate + CoA. It catalyses the reaction 1-octadecanoyl-sn-glycero-3-phosphate + (9Z)-octadecenoyl-CoA = 1-octadecanoyl-2-(9Z-octadecenoyl)-sn-glycero-3-phosphate + CoA. The catalysed reaction is 1-(5Z,8Z,11Z,14Z-eicosatetraenoyl)-sn-glycero-3-phosphate + (9Z)-octadecenoyl-CoA = 1-(5Z,8Z,11Z,14Z)-eicosatetraenoyl-2-(9Z)-octadecenoyl-sn-glycero-3-phosphate + CoA. With respect to regulation, acyltransferase activity is inhibited by detergents such as Triton X-100 and 3-[(3-cholamidopropyl)dimethylammonio]-1-propanesulfonate (CHAPS). Acyltransferase activity is inhibited by the presence of magnesium and calcium. Functionally, coenzyme A-dependent lysophosphatidic acid acyltransferase that catalyzes the transfer of an acyl group on a lysophosphatidic acid. Functions preferentially with 1-oleoyl-lysophosphatidic acid followed by 1-palmitoyl-lysophosphatidic acid, 1-stearoyl-lysophosphatidic acid and 1-arachidonoyl-lysophosphatidic acid as lipid acceptor. Functions preferentially with arachidonoyl-CoA followed by oleoyl-CoA as acyl group donors. Functions in phosphatidic acid biosynthesis. May regulate the cellular storage of triacylglycerol through activation of the phospholipase PNPLA2. Involved in keratinocyte differentiation. Regulates lipid droplet fusion. In Homo sapiens (Human), this protein is 1-acylglycerol-3-phosphate O-acyltransferase ABHD5.